A 437-amino-acid chain; its full sequence is Argininosuccinate lyase (437 aa).

The protein belongs to the lyase 1 family. Argininosuccinate lyase subfamily.

The protein localises to the cytoplasm. The catalysed reaction is 2-(N(omega)-L-arginino)succinate = fumarate + L-arginine. It participates in amino-acid biosynthesis; L-arginine biosynthesis; L-arginine from L-ornithine and carbamoyl phosphate: step 3/3. The polypeptide is Argininosuccinate lyase (Clostridium acetobutylicum (strain ATCC 824 / DSM 792 / JCM 1419 / IAM 19013 / LMG 5710 / NBRC 13948 / NRRL B-527 / VKM B-1787 / 2291 / W)).